Reading from the N-terminus, the 450-residue chain is tRNA-2-methylthio-N(6)-dimethylallyladenosine synthase (450 aa).

The 119-residue stretch at 14–132 (GEFFIETWGC…FPNYLNEVKK (119 aa)) folds into the MTTase N-terminal domain. Positions 23, 59, 93, 169, 173, and 176 each coordinate [4Fe-4S] cluster. Positions 155–385 (RKNSMKAFVT…VEVVNEISAK (231 aa)) constitute a Radical SAM core domain. The TRAM domain occupies 388–450 (KAYEGKIEEV…NSFSLTGEEI (63 aa)).

Belongs to the methylthiotransferase family. MiaB subfamily. In terms of assembly, monomer. The cofactor is [4Fe-4S] cluster.

It is found in the cytoplasm. The catalysed reaction is N(6)-dimethylallyladenosine(37) in tRNA + (sulfur carrier)-SH + AH2 + 2 S-adenosyl-L-methionine = 2-methylsulfanyl-N(6)-dimethylallyladenosine(37) in tRNA + (sulfur carrier)-H + 5'-deoxyadenosine + L-methionine + A + S-adenosyl-L-homocysteine + 2 H(+). Functionally, catalyzes the methylthiolation of N6-(dimethylallyl)adenosine (i(6)A), leading to the formation of 2-methylthio-N6-(dimethylallyl)adenosine (ms(2)i(6)A) at position 37 in tRNAs that read codons beginning with uridine. The sequence is that of tRNA-2-methylthio-N(6)-dimethylallyladenosine synthase from Clostridium botulinum (strain Okra / Type B1).